The sequence spans 181 residues: Inner membrane-spanning protein YciB (181 aa).

5 consecutive transmembrane segments (helical) span residues 10–30, 50–70, 72–92, 118–138, and 148–168; these read LIIFFAVYKFFDIYVASGALI, MHLITFVMVTVFGSLTLILHD, SFIKWKVTIVYALFAIALGVS, VTWYWVSFFVVCGLVNIYVAF, and FKVFGLTALTLINTVLTVLYL.

The protein belongs to the YciB family.

The protein localises to the cell inner membrane. Functionally, plays a role in cell envelope biogenesis, maintenance of cell envelope integrity and membrane homeostasis. The protein is Inner membrane-spanning protein YciB of Shewanella halifaxensis (strain HAW-EB4).